The chain runs to 382 residues: Lipid-A-disaccharide synthase (382 aa).

The protein belongs to the LpxB family.

It catalyses the reaction 2-N,3-O-bis[(3R)-3-hydroxytetradecanoyl]-alpha-D-glucosaminyl 1-phosphate + UDP-2-N,3-O-bis[(3R)-3-hydroxytetradecanoyl]-alpha-D-glucosamine = lipid A disaccharide (E. coli) + UDP + H(+). The catalysed reaction is a lipid X + a UDP-2-N,3-O-bis[(3R)-3-hydroxyacyl]-alpha-D-glucosamine = a lipid A disaccharide + UDP + H(+). It functions in the pathway glycolipid biosynthesis; lipid IV(A) biosynthesis; lipid IV(A) from (3R)-3-hydroxytetradecanoyl-[acyl-carrier-protein] and UDP-N-acetyl-alpha-D-glucosamine: step 5/6. Its function is as follows. Condensation of UDP-2,3-diacylglucosamine and 2,3-diacylglucosamine-1-phosphate to form lipid A disaccharide, a precursor of lipid A, a phosphorylated glycolipid that anchors the lipopolysaccharide to the outer membrane of the cell. In Sodalis glossinidius (strain morsitans), this protein is Lipid-A-disaccharide synthase.